The sequence spans 1948 residues: [F-actin]-monooxygenase MICAL2 (1948 aa).

Positions 2–494 (GENEDEKQAQ…KHLYITKEMD (493 aa)) are monooxygenase domain. FAD contacts are provided by residues Cys-97, 116–118 (EKR), 123–125 (RNN), Phe-183, Tyr-298, and Asp-398. One can recognise a Calponin-homology (CH) domain in the interval 516–619 (DIRPNKLLTW…MVMYLSKFYE (104 aa)). Ser-631 bears the Phosphoserine mark. Positions 660–681 (RKRTPRVDAQTEENDVNKRRRQ) match the Nuclear localization signal motif. Disordered regions lie at residues 664-709 (PRVD…ESGN), 753-776 (SRPPGTSHCPKLEESTPRLPPPLK), and 891-923 (KRVPHAHPPSPPSCLPSPDPAAAPSPPAADSVS). Residues 693–709 (SSRSLGSSQEYAKESGN) are compositionally biased toward polar residues. Residues 896 to 917 (AHPPSPPSCLPSPDPAAAPSPP) show a composition bias toward pro residues. An LIM zinc-binding domain is found at 980–1042 (DTCYFCKKRV…KLHFAHCKTS (63 aa)). Zn(2+) contacts are provided by Cys-982, Cys-985, His-1003, Cys-1006, Cys-1009, Cys-1012, Cys-1032, and His-1035. Disordered regions lie at residues 1045 to 1134 (QRKR…GQDG), 1146 to 1185 (SEDSSSDTESDSGSIIGPCTEACEERPRLPESPPLSQPLT), and 1233 to 1298 (QSNS…DDVS). The segment covering 1050–1059 (AELNQQREEE) has biased composition (basic and acidic residues). A compositionally biased stretch (polar residues) spans 1233-1243 (QSNSTPMNQRA). Residues 1254–1271 (SSSSSPSLPSSFSSASVP) show a composition bias toward low complexity. Over residues 1277–1292 (DSSSPQVTYNLHSPQI) the composition is skewed to polar residues. The interval 1300–1339 (TPIYLRRARAQGITKEIPLYLPHSPMLESTEHCLVSPDGE) is interaction with MAPK1. Disordered stretches follow at residues 1478 to 1505 (QKKALGETRTPAAKAPREREVPPPKSPL), 1519 to 1622 (SSEA…SSKV), 1672 to 1726 (GDFF…QAGK), and 1739 to 1767 (SGPGAPVTEDTSSPTSSSAEEDVETQLSS). Basic and acidic residues predominate over residues 1522–1534 (AGKKTSSKPETKT). The span at 1570–1579 (KASAFFSLAS) shows a compositional bias: low complexity. Over residues 1580–1591 (PTSKAAQASDLS) the composition is skewed to polar residues. Residues 1672 to 1682 (GDFFNSPKEKG) show a composition bias toward basic and acidic residues. Ser-1677 carries the phosphoserine modification. 2 stretches are compositionally biased toward polar residues: residues 1698-1715 (VDSTSMGQVAHPSSTGQD) and 1747-1756 (EDTSSPTSSS). The 151-residue stretch at 1786 to 1936 (KQEELKRLHK…ERTQDQHFEN (151 aa)) folds into the bMERB domain.

This sequence belongs to the Mical family. As to quaternary structure, interacts with PLXNA4. Interacts with RAB1B. Interacts with MAPK1/ERK2. Interacts with RAB35, RAB8A, RAB10, RAB13 and RAB15 (in their GTP-bound forms); binding to RAB35 is of low affinity compared to other Rab proteins; at least in case of RAB8A may bind 2 molecules of RAB8A simultaneously through a high and a low affinity binding site, respectively. May interact with MAPK1/ERK2. FAD is required as a cofactor.

It is found in the nucleus. Its subcellular location is the cytoplasm. It catalyses the reaction L-methionyl-[F-actin] + NADPH + O2 + H(+) = L-methionyl-(R)-S-oxide-[F-actin] + NADP(+) + H2O. Its function is as follows. Methionine monooxygenase that promotes depolymerization of F-actin by mediating oxidation of residues 'Met-44' and 'Met-47' on actin to form methionine-sulfoxide, resulting in actin filament disassembly and preventing repolymerization. Regulates the disassembly of branched actin networks also by oxidizing ARP3B-containing ARP2/3 complexes leading to ARP3B dissociation from the network. Acts as a key regulator of the SRF signaling pathway elicited by nerve growth factor and serum: mediates oxidation and subsequent depolymerization of nuclear actin, leading to increase MKL1/MRTF-A presence in the nucleus and promote SRF:MKL1/MRTF-A-dependent gene transcription. Does not activate SRF:MKL1/MRTF-A through RhoA. The polypeptide is [F-actin]-monooxygenase MICAL2 (Rattus norvegicus (Rat)).